Reading from the N-terminus, the 89-residue chain is Small ribosomal subunit protein uS15 (89 aa).

The protein belongs to the universal ribosomal protein uS15 family. As to quaternary structure, part of the 30S ribosomal subunit. Forms a bridge to the 50S subunit in the 70S ribosome, contacting the 23S rRNA.

Functionally, one of the primary rRNA binding proteins, it binds directly to 16S rRNA where it helps nucleate assembly of the platform of the 30S subunit by binding and bridging several RNA helices of the 16S rRNA. Forms an intersubunit bridge (bridge B4) with the 23S rRNA of the 50S subunit in the ribosome. In Prosthecochloris aestuarii (strain DSM 271 / SK 413), this protein is Small ribosomal subunit protein uS15.